The sequence spans 2090 residues: Dysferlin (2090 aa).

One can recognise a C2 1 domain in the interval 1-101; that stretch reads MLRVFILFAE…LATPSLSASF (101 aa). Topologically, residues 1–2056 are cytoplasmic; sequence MLRVFILFAE…FILWRRFRCA (2056 aa). The Ca(2+) site is built by D18, I19, D21, and N40. Positions 130–217 are disordered; that stretch reads VPLFPPPASL…SAPPRKLLSD (88 aa). The span at 155–172 shows a compositional bias: acidic residues; it reads GGEEDTEDQGLTGDEAEP. Residue G164 is modified to Phosphoserine. Phosphothreonine is present on T166. G167 is subject to Phosphoserine. Residues 188–199 are compositionally biased toward pro residues; that stretch reads PRKPPSHPPPHY. C2 domains follow at residues 206–323, 362–498, 1146–1272, 1320–1448, 1571–1689, and 1805–1953; these read RSSA…RKWL, DKED…EEEP, GVNR…PLTR, PPPQ…AESP, PMPP…ARCG, and GRPG…EKCS. The residue at position 209 (A209) is a Phosphoserine. P219 bears the Phosphothreonine mark. Ca(2+)-binding residues include D411, D419, D467, D469, D475, D1178, D1184, D1240, and D1242. Residues D1604, D1610, D1659, D1661, D1924, S1927, and D1930 each contribute to the Ca(2+) site. The interval 2005–2027 is disordered; that stretch reads SEHEERPAGQGRDEPNMNPKLED. Residues 2057–2077 form a helical membrane-spanning segment; sequence IILFIILFILLLFLGVFVYAF. At 2078-2090 the chain is on the extracellular side; that stretch reads PNYAAMKLVKPFR.

Belongs to the ferlin family. As to quaternary structure, interacts with CAV3. Interacts with AHNAK; the interaction is direct and Ca(2+)-independent. Interacts with AHNAK2; the interaction is direct and Ca(2+)-independent. Interacts with ANXA1; the interaction is Ca(2+)- and injury state-dependent. Interacts with ANXA2; the interaction is Ca(2+)- and injury state-dependent. Interacts with CACNA1S and PARVB. Interacts with TRIM72/MG53; interaction is required for transport to sites of cell injury during repair patch formation. Interacts with RIPOR2; this interaction occurs during early myogenic differentiation. It depends on Ca(2+) as a cofactor. Expressed in skeletal and cardiac muscles (at protein level). Expressed in skeletal muscle and heart. Also found in brain, liver and kidney.

It localises to the cell membrane. Its subcellular location is the sarcolemma. The protein resides in the cytoplasmic vesicle membrane. Key calcium ion sensor involved in the Ca(2+)-triggered synaptic vesicle-plasma membrane fusion. Plays a role in the sarcolemma repair mechanism of both skeletal muscle and cardiomyocytes that permits rapid resealing of membranes disrupted by mechanical stress. The sequence is that of Dysferlin (Dysf) from Mus musculus (Mouse).